Here is a 208-residue protein sequence, read N- to C-terminus: MLYDQIKNNKTSSYATFIPMVVEQHSRGERSYDIYSRLLKERIIFITGAIEDNMANNIVAQILFLEAENPEKDIFLYINSPGGIITSGMSIYDTMQFVKPEISTICLGQACSMAALLLTSGAKGKRFCLPNSKVMIHQPLGGYQGQASDIAIHAREIMEMKKKLNKLMSFHTGQSIKKINKDTERDCFLSANQSIKYGLIDFILSQRQ.

Catalysis depends on S112, which acts as the Nucleophile. The active site involves H137.

The protein belongs to the peptidase S14 family. Fourteen ClpP subunits assemble into 2 heptameric rings which stack back to back to give a disk-like structure with a central cavity, resembling the structure of eukaryotic proteasomes.

The protein resides in the cytoplasm. The enzyme catalyses Hydrolysis of proteins to small peptides in the presence of ATP and magnesium. alpha-casein is the usual test substrate. In the absence of ATP, only oligopeptides shorter than five residues are hydrolyzed (such as succinyl-Leu-Tyr-|-NHMec, and Leu-Tyr-Leu-|-Tyr-Trp, in which cleavage of the -Tyr-|-Leu- and -Tyr-|-Trp bonds also occurs).. Its function is as follows. Cleaves peptides in various proteins in a process that requires ATP hydrolysis. Has a chymotrypsin-like activity. Plays a major role in the degradation of misfolded proteins. The protein is ATP-dependent Clp protease proteolytic subunit of Buchnera aphidicola subsp. Acyrthosiphon pisum (strain APS) (Acyrthosiphon pisum symbiotic bacterium).